Consider the following 292-residue polypeptide: Large ribosomal subunit protein uL4 (292 aa).

Basic and acidic residues-rich tracts occupy residues 1–33 and 42–51; these read MVEV…DKTA and KVSDKAESTP. Disordered regions lie at residues 1–59 and 132–158; these read MVEV…VKTS and GTHK…TGKA.

This sequence belongs to the universal ribosomal protein uL4 family. As to quaternary structure, part of the 50S ribosomal subunit.

In terms of biological role, one of the primary rRNA binding proteins, this protein initially binds near the 5'-end of the 23S rRNA. It is important during the early stages of 50S assembly. It makes multiple contacts with different domains of the 23S rRNA in the assembled 50S subunit and ribosome. Functionally, forms part of the polypeptide exit tunnel. The chain is Large ribosomal subunit protein uL4 from Mycoplasmopsis pulmonis (strain UAB CTIP) (Mycoplasma pulmonis).